Here is a 642-residue protein sequence, read N- to C-terminus: Chaperone protein DnaK (642 aa).

At Thr199 the chain carries Phosphothreonine; by autocatalysis. A compositionally biased stretch (basic and acidic residues) spans 570–585; the sequence is EELEQASKDGDKEAID. The tract at residues 570 to 642 is disordered; sequence EELEQASKDG…FEEVKDDDKK (73 aa). Residues 600-620 are compositionally biased toward low complexity; it reads EAAQQQQAQQGAEGAAGGEQQ. The segment covering 627-642 has biased composition (acidic residues); that stretch reads DVVDAEFEEVKDDDKK.

The protein belongs to the heat shock protein 70 family.

In terms of biological role, acts as a chaperone. In Idiomarina loihiensis (strain ATCC BAA-735 / DSM 15497 / L2-TR), this protein is Chaperone protein DnaK.